A 142-amino-acid polypeptide reads, in one-letter code: Large ribosomal subunit protein uL11 (142 aa).

This sequence belongs to the universal ribosomal protein uL11 family. As to quaternary structure, part of the ribosomal stalk of the 50S ribosomal subunit. Interacts with L10 and the large rRNA to form the base of the stalk. L10 forms an elongated spine to which L12 dimers bind in a sequential fashion forming a multimeric L10(L12)X complex. In terms of processing, one or more lysine residues are methylated.

Functionally, forms part of the ribosomal stalk which helps the ribosome interact with GTP-bound translation factors. In Enterobacter sp. (strain 638), this protein is Large ribosomal subunit protein uL11.